The primary structure comprises 285 residues: Eukaryotic translation initiation factor 3 subunit F-2 (285 aa).

The region spanning 11-145 (VFIKPLVLFQ…TRLYCAVEIG (135 aa)) is the MPN domain.

It belongs to the eIF-3 subunit F family. Component of the eukaryotic translation initiation factor 3 (eIF-3) complex. The eIF-3 complex interacts with pix.

It is found in the cytoplasm. Component of the eukaryotic translation initiation factor 3 (eIF-3) complex, which is involved in protein synthesis of a specialized repertoire of mRNAs and, together with other initiation factors, stimulates binding of mRNA and methionyl-tRNAi to the 40S ribosome. The eIF-3 complex specifically targets and initiates translation of a subset of mRNAs involved in cell proliferation. This is Eukaryotic translation initiation factor 3 subunit F-2 from Drosophila yakuba (Fruit fly).